We begin with the raw amino-acid sequence, 326 residues long: L-lactate dehydrogenase (326 aa).

Residues Val20, Asp41, Lys46, Tyr71, and 85 to 86 each bind NAD(+); that span reads GA. Substrate contacts are provided by Gln88 and Arg94. Residues Ser107, 124–126, and Ser149 contribute to the NAD(+) site; that span reads AAN. Residue 126–129 coordinates substrate; sequence NPVD. Residue 154–157 coordinates substrate; that stretch reads DTAR. Beta-D-fructose 1,6-bisphosphate is bound by residues Arg159, 171–174, and His174; that span reads RSVH. His181 functions as the Proton acceptor in the catalytic mechanism. Tyr226 is subject to Phosphotyrosine. Thr235 provides a ligand contact to substrate.

This sequence belongs to the LDH/MDH superfamily. LDH family. In terms of assembly, homotetramer.

The protein localises to the cytoplasm. It catalyses the reaction (S)-lactate + NAD(+) = pyruvate + NADH + H(+). The protein operates within fermentation; pyruvate fermentation to lactate; (S)-lactate from pyruvate: step 1/1. With respect to regulation, allosterically activated by fructose 1,6-bisphosphate (FBP) alone under acidic conditions, while it requires additional activation factors such as divalent cations (Mn(2+)) under neutral conditions. Under acidic conditions, Mn(2+) is an inhibitor in the absence of fructose 1,6-bisphosphate (FBP). In case of L.casei, L-LDH binds four fructose 1,6-bisphosphate (FBP) molecules per tetramer, while usual allosteric L-LDH binds only two fructose 1,6-bisphosphate (FBP) molecules per tetramer. In terms of biological role, catalyzes the conversion of lactate to pyruvate. The protein is L-lactate dehydrogenase of Lacticaseibacillus casei (Lactobacillus casei).